We begin with the raw amino-acid sequence, 344 residues long: Ion-translocating oxidoreductase complex subunit D (344 aa).

The next 4 membrane-spanning stretches (helical) occupy residues 23 to 43 (LVLG…GPGT), 44 to 64 (LLNL…MLAL), 77 to 99 (SALV…WLTL), and 120 to 140 (PFNP…LEMT). Threonine 172 bears the FMN phosphoryl threonine mark. 5 helical membrane passes run 198–218 (LGSA…LFLL), 222–242 (LFTW…SLLF), 252–272 (GSPL…FIVT), 285–305 (LVFG…GGYP), and 306–326 (DGMA…DYYT).

Belongs to the NqrB/RnfD family. As to quaternary structure, the complex is composed of six subunits: RnfA, RnfB, RnfC, RnfD, RnfE and RnfG. It depends on FMN as a cofactor.

The protein localises to the cell inner membrane. Part of a membrane-bound complex that couples electron transfer with translocation of ions across the membrane. This is Ion-translocating oxidoreductase complex subunit D from Pseudomonas aeruginosa (strain LESB58).